The sequence spans 245 residues: Thiopurine S-methyltransferase (245 aa).

S14 carries the phosphoserine modification. 29 to 40 (WREKWVDGKIGF) contributes to the S-adenosyl-L-methionine binding site. Substrate is bound at residue F40. An N6-acetyllysine modification is found at K58. S-adenosyl-L-methionine contacts are provided by L69, E90, and R152.

Belongs to the class I-like SAM-binding methyltransferase superfamily. TPMT family. In terms of assembly, monomer.

It localises to the cytoplasm. It catalyses the reaction S-adenosyl-L-methionine + a thiopurine = S-adenosyl-L-homocysteine + a thiopurine S-methylether.. This chain is Thiopurine S-methyltransferase (TPMT), found in Panthera tigris (Tiger).